The following is a 394-amino-acid chain: Hemagglutinin-esterase (394 aa).

A signal peptide spans 1 to 16; sequence MARFIILFLLLAPVYS. Over 17–347 the chain is Extracellular; the sequence is RLCLRNHPDT…NNRVDAIPPQ (331 aa). Ser32 is a catalytic residue. Positions 119–121 match the Cell attachment site motif; sequence RGD. Catalysis depends on residues Asp261 and His264. Asn333 carries an N-linked (GlcNAc...) asparagine; by host glycan. The segment at 335–358 is highly polymorphic region; the sequence is TDVNNRVDAIPPQLSNIFISMGVA. The helical transmembrane segment at 348-368 threads the bilayer; sequence LSNIFISMGVAGFGIALFLAG. The Cytoplasmic portion of the chain corresponds to 369–394; that stretch reads WKACVWIAAFMYKSRGRNPPANLSVA.

Its subcellular location is the host membrane. The protein resides in the virion membrane. It catalyses the reaction N-acetyl-9-O-acetylneuraminate + H2O = N-acetylneuraminate + acetate + H(+). It carries out the reaction N-acetyl-4-O-acetylneuraminate + H2O = N-acetylneuraminate + acetate + H(+). Performs attachment to host receptor thereby inducing virus particle entry into target cell. Binds specifically to 5-N-acetyl-4-O-acetyl neuraminic acid on host cells, which plays a major role in cell tropism of the virus. ALso mediates de-O-acetylation of N-acetyl-4-O-acetylneuraminic acid. This receptor-destroying activity is important for virus release as it probably helps preventing self-aggregation and ensures the efficient spread of the progeny virus from cell to cell. The highly polymorphic region (HPR) modulates the virulence in host. Catalyzes the removal of terminal sialic acid residues from viral and cellular glycoconjugates. This Gadus morhua (Atlantic cod) protein is Hemagglutinin-esterase.